We begin with the raw amino-acid sequence, 218 residues long: MNATSTPSLPYDTNRLRELAHLLIGTISEFAQAGWTPATSSNFSHRLDEHHVAITVSGRDKRCLREEDIIAVDLDGNAVGHPHTPSAETLLHTQLYRRFPEIGCVLHTHSLTQTVASRVYAGAGHISLKDYELLKAFEGHSTHETTLDVPVFCNTQNMNILAAQVDTLLDKQRMWGYLINGHGMYTWGNTLADARRHLEALEFLLHCELDLLKLRGYL.

Zn(2+) is bound by residues H107 and H109.

The protein belongs to the aldolase class II family. MtnB subfamily. Zn(2+) serves as cofactor.

The catalysed reaction is 5-(methylsulfanyl)-D-ribulose 1-phosphate = 5-methylsulfanyl-2,3-dioxopentyl phosphate + H2O. It participates in amino-acid biosynthesis; L-methionine biosynthesis via salvage pathway; L-methionine from S-methyl-5-thio-alpha-D-ribose 1-phosphate: step 2/6. In terms of biological role, catalyzes the dehydration of methylthioribulose-1-phosphate (MTRu-1-P) into 2,3-diketo-5-methylthiopentyl-1-phosphate (DK-MTP-1-P). The sequence is that of Methylthioribulose-1-phosphate dehydratase from Xylella fastidiosa (strain M12).